The sequence spans 189 residues: MASASPRRQDLLDALGIKYKSVPAELDEHFFPGELPRKAAERVAREKAEAVARNFEHGLILAADTIVVCDGKVLGKPQDEDDAFLMLSHLSGKSHEVITAVCIKDIDQAESEVESEVTRVYFRSLSPMEIRTYISSGEAMDKAGAYGIQGLGSVFVERIDGCYFNVVGLPISRVYGMLARRGTNILRNE.

The active-site Proton acceptor is Asp-64.

This sequence belongs to the Maf family. YhdE subfamily. A divalent metal cation is required as a cofactor.

The protein resides in the cytoplasm. The catalysed reaction is dTTP + H2O = dTMP + diphosphate + H(+). It catalyses the reaction UTP + H2O = UMP + diphosphate + H(+). Nucleoside triphosphate pyrophosphatase that hydrolyzes dTTP and UTP. May have a dual role in cell division arrest and in preventing the incorporation of modified nucleotides into cellular nucleic acids. This is dTTP/UTP pyrophosphatase from Syntrophomonas wolfei subsp. wolfei (strain DSM 2245B / Goettingen).